A 245-amino-acid chain; its full sequence is Probable transcriptional regulatory protein CPR_1922 (245 aa).

Belongs to the TACO1 family.

Its subcellular location is the cytoplasm. The chain is Probable transcriptional regulatory protein CPR_1922 from Clostridium perfringens (strain SM101 / Type A).